The chain runs to 262 residues: Orotidine 5'-phosphate decarboxylase (262 aa).

Residues D35, 57 to 59 (KTH), 89 to 98 (DRKFADIGNT), Y215, and R233 each bind substrate. The active-site Proton donor is K91.

It belongs to the OMP decarboxylase family.

The enzyme catalyses orotidine 5'-phosphate + H(+) = UMP + CO2. It participates in pyrimidine metabolism; UMP biosynthesis via de novo pathway; UMP from orotate: step 2/2. The polypeptide is Orotidine 5'-phosphate decarboxylase (URA3) (Pichia kudriavzevii (Yeast)).